The primary structure comprises 1580 residues: Transcriptional activator GLI3 (1580 aa).

Residue methionine 1 is modified to N-acetylmethionine. 2 stretches are compositionally biased toward polar residues: residues 1 to 10 (MEAQSHSSTT) and 58 to 78 (ITMQ…PSTS). The segment at 1 to 79 (MEAQSHSSTT…KVSEEPSTSS (79 aa)) is disordered. Arginine 175 carries the omega-N-methylarginine modification. The segment at 368–475 (QSLGSAFGHS…DKDESKQEPE (108 aa)) is disordered. Polar residues predominate over residues 401 to 427 (NPVQVSSGPSESSQNKPTSESAVSSTG). Residues lysine 438 and lysine 462 each participate in a glycyl lysine isopeptide (Lys-Gly) (interchain with G-Cter in SUMO2) cross-link. The span at 461 to 474 (VKEEGDKDESKQEP) shows a compositional bias: basic and acidic residues. 5 consecutive C2H2-type zinc fingers follow at residues 480–505 (TNCH…NNDH), 513–540 (FVCR…MRRH), 546–570 (HKCT…LRSH), 576–601 (YVCE…NRTH), and 607–632 (YVCK…KTVH). The interval 620–728 (DPSSLRKHVK…PISNYSNSGL (109 aa)) is disordered. Positions 632–648 (HGPEAHVTKKQRGDIHP) are enriched in basic and acidic residues. Serine 664 carries the phosphoserine modification. A compositionally biased stretch (basic and acidic residues) spans 684–699 (SKREECLQVKTVKAEK). A compositionally biased stretch (low complexity) spans 703–726 (SQPSPGGQSSCSSQQSPISNYSNS). A mediates interaction with DZIP1 region spans residues 745–845 (DETPIMDSTI…VDVTMLNMLN (101 aa)). Lysine 773 participates in a covalent cross-link: Glycyl lysine isopeptide (Lys-Gly) (interchain with G-Cter in ubiquitin). Lysine 779 participates in a covalent cross-link: Glycyl lysine isopeptide (Lys-Gly) (interchain with G-Cter in SUMO2); alternate. A Glycyl lysine isopeptide (Lys-Gly) (interchain with G-Cter in ubiquitin); alternate cross-link involves residue lysine 779. Residues lysine 784 and lysine 800 each participate in a glycyl lysine isopeptide (Lys-Gly) (interchain with G-Cter in ubiquitin) cross-link. Phosphoserine; by PKA is present on residues serine 849, serine 865, serine 877, and serine 907. Residues 863-882 (RSSGISPCFSSRRSSEASQA) show a composition bias toward low complexity. The interval 863-918 (RSSGISPCFSSRRSSEASQAEGRPQNVSVADSYDPISTDASRRSSEASQSDGLPSL) is disordered. Positions 908–918 (EASQSDGLPSL) are enriched in polar residues. A phosphoserine; by PKA mark is found at serine 980 and serine 1006. The disordered stretch occupies residues 981-1042 (DGGAHGYGRR…PAMATSAEKR (62 aa)).

The protein belongs to the GLI C2H2-type zinc-finger protein family. As to quaternary structure, the full-length GLI3 form (GLI3FL) interacts with SUFU and this interaction regulates the formation of either repressor or activator forms of GLI3. Its association with SUFU is regulated by Hh signaling and dissociation of the SUFU-GLI3 interaction requires the presence of the ciliary motor KIF3A. Interacts with KIF7. The activator form of GLI3 (GLI3A) but not the repressor form (GLI3R) can interact with TRPS1. The phosphorylated form interacts with BTRC. Interacts with ZIC1. Interacts with ZIC3 (via C2H2-type domains 3, 4 and 5); the interaction enhances its transcriptional activity. Interacts with WRD11; the interaction associates EMX1 with GLI3. Interacts with DZIP1; retains GLI3 within the cytoplasm. Post-translationally, phosphorylated on multiple sites by protein kinase A (PKA) and phosphorylation by PKA primes further phosphorylation by CK1 and GSK3. Phosphorylated by DYRK2 (in vitro). Phosphorylation is essential for its proteolytic processing. In terms of processing, transcriptional repressor GLI3R, a C-terminally truncated form, is generated from the full-length GLI3 protein (GLI3FL/GLI3-190) through proteolytic processing. This process requires PKA-primed phosphorylation of GLI3, ubiquitination of GLI3 and the presence of BTRC. GLI3FL is complexed with SUFU in the cytoplasm and is maintained in a neutral state. Without the Hh signal, the SUFU-GLI3 complex is recruited to cilia, leading to the efficient processing of GLI3FL into GLI3R. GLI3R formation leads to its dissociation from SUFU, allowing it to translocate into the nucleus, and repress Hh target genes. When Hh signaling is initiated, SUFU dissociates from GLI3FL and this has two consequences. First, GLI3R production is halted. Second, free GLI3FL translocates to the nucleus, where it is phosphorylated, destabilized, and converted to a transcriptional activator (GLI3A). Phosphorylated in vitro by ULK3.

Its subcellular location is the nucleus. The protein resides in the cytoplasm. It is found in the cell projection. The protein localises to the cilium. In terms of biological role, has a dual function as a transcriptional activator and a repressor of the sonic hedgehog (Shh) pathway, and plays a role in limb development. The full-length GLI3 form (GLI3FL) after phosphorylation and nuclear translocation, acts as an activator (GLI3A) while GLI3R, its C-terminally truncated form, acts as a repressor. A proper balance between the GLI3 activator and the repressor GLI3R, rather than the repressor gradient itself or the activator/repressor ratio gradient, specifies limb digit number and identity. In concert with TRPS1, plays a role in regulating the size of the zone of distal chondrocytes, in restricting the zone of PTHLH expression in distal cells and in activating chondrocyte proliferation. Binds to the minimal GLI-consensus sequence 5'-GGGTGGTC-3'. Plays a role in limb and brain development. This is Transcriptional activator GLI3 (GLI3) from Pan troglodytes (Chimpanzee).